We begin with the raw amino-acid sequence, 287 residues long: Ribosomal RNA small subunit methyltransferase I (287 aa).

It belongs to the methyltransferase superfamily. RsmI family.

Its subcellular location is the cytoplasm. It carries out the reaction cytidine(1402) in 16S rRNA + S-adenosyl-L-methionine = 2'-O-methylcytidine(1402) in 16S rRNA + S-adenosyl-L-homocysteine + H(+). Functionally, catalyzes the 2'-O-methylation of the ribose of cytidine 1402 (C1402) in 16S rRNA. The polypeptide is Ribosomal RNA small subunit methyltransferase I (Helicobacter pylori (strain ATCC 700392 / 26695) (Campylobacter pylori)).